The chain runs to 211 residues: 2,3-bisphosphoglycerate-dependent phosphoglycerate mutase (211 aa).

Substrate contacts are provided by residues 9-16 (RHGQSDWN), 22-23 (TG), R61, 88-91 (ERDY), K99, 115-116 (RR), and 159-160 (GN). The active-site Tele-phosphohistidine intermediate is the H10. The active-site Proton donor/acceptor is E88.

The protein belongs to the phosphoglycerate mutase family. BPG-dependent PGAM subfamily. As to quaternary structure, homodimer.

The catalysed reaction is (2R)-2-phosphoglycerate = (2R)-3-phosphoglycerate. Its pathway is carbohydrate degradation; glycolysis; pyruvate from D-glyceraldehyde 3-phosphate: step 3/5. In terms of biological role, catalyzes the interconversion of 2-phosphoglycerate and 3-phosphoglycerate. The chain is 2,3-bisphosphoglycerate-dependent phosphoglycerate mutase from Rhizobium johnstonii (strain DSM 114642 / LMG 32736 / 3841) (Rhizobium leguminosarum bv. viciae).